Consider the following 541-residue polypeptide: Chaperonin GroEL 2 (541 aa).

ATP is bound by residues 29-32, 86-90, G413, 476-478, and D492; these read TLGP, DGTTT, and NAA.

This sequence belongs to the chaperonin (HSP60) family. As to quaternary structure, forms a cylinder of 14 subunits composed of two heptameric rings stacked back-to-back. Interacts with the co-chaperonin GroES.

Its subcellular location is the cytoplasm. It catalyses the reaction ATP + H2O + a folded polypeptide = ADP + phosphate + an unfolded polypeptide.. In terms of biological role, together with its co-chaperonin GroES, plays an essential role in assisting protein folding. The GroEL-GroES system forms a nano-cage that allows encapsulation of the non-native substrate proteins and provides a physical environment optimized to promote and accelerate protein folding. The chain is Chaperonin GroEL 2 from Streptomyces avermitilis (strain ATCC 31267 / DSM 46492 / JCM 5070 / NBRC 14893 / NCIMB 12804 / NRRL 8165 / MA-4680).